Here is a 325-residue protein sequence, read N- to C-terminus: Acetyl-coenzyme A carboxylase carboxyl transferase subunit alpha (325 aa).

The CoA carboxyltransferase C-terminal domain occupies 38-292; it reads KLEKRLHALE…DQVLEKSLKQ (255 aa).

It belongs to the AccA family. Acetyl-CoA carboxylase is a heterohexamer composed of biotin carboxyl carrier protein (AccB), biotin carboxylase (AccC) and two subunits each of ACCase subunit alpha (AccA) and ACCase subunit beta (AccD).

It is found in the cytoplasm. The catalysed reaction is N(6)-carboxybiotinyl-L-lysyl-[protein] + acetyl-CoA = N(6)-biotinyl-L-lysyl-[protein] + malonyl-CoA. Its pathway is lipid metabolism; malonyl-CoA biosynthesis; malonyl-CoA from acetyl-CoA: step 1/1. Component of the acetyl coenzyme A carboxylase (ACC) complex. First, biotin carboxylase catalyzes the carboxylation of biotin on its carrier protein (BCCP) and then the CO(2) group is transferred by the carboxyltransferase to acetyl-CoA to form malonyl-CoA. The protein is Acetyl-coenzyme A carboxylase carboxyl transferase subunit alpha of Halalkalibacterium halodurans (strain ATCC BAA-125 / DSM 18197 / FERM 7344 / JCM 9153 / C-125) (Bacillus halodurans).